The following is a 378-amino-acid chain: H repeat-associated putative transposase YhhI (378 aa).

This sequence belongs to the transposase 11 family.

In Escherichia coli (strain K12), this protein is H repeat-associated putative transposase YhhI (yhhI).